A 266-amino-acid polypeptide reads, in one-letter code: 4-hydroxy-tetrahydrodipicolinate reductase (266 aa).

Residue Gly-10–Met-15 coordinates NAD(+). NADP(+) is bound at residue Lys-38. Residues Gly-99–Thr-101 and Ala-125–Phe-128 each bind NAD(+). Residue His-155 is the Proton donor/acceptor of the active site. His-156 provides a ligand contact to (S)-2,3,4,5-tetrahydrodipicolinate. Lys-159 acts as the Proton donor in catalysis. Gly-165–Thr-166 lines the (S)-2,3,4,5-tetrahydrodipicolinate pocket.

It belongs to the DapB family.

The protein resides in the cytoplasm. It catalyses the reaction (S)-2,3,4,5-tetrahydrodipicolinate + NAD(+) + H2O = (2S,4S)-4-hydroxy-2,3,4,5-tetrahydrodipicolinate + NADH + H(+). The enzyme catalyses (S)-2,3,4,5-tetrahydrodipicolinate + NADP(+) + H2O = (2S,4S)-4-hydroxy-2,3,4,5-tetrahydrodipicolinate + NADPH + H(+). It participates in amino-acid biosynthesis; L-lysine biosynthesis via DAP pathway; (S)-tetrahydrodipicolinate from L-aspartate: step 4/4. Catalyzes the conversion of 4-hydroxy-tetrahydrodipicolinate (HTPA) to tetrahydrodipicolinate. The polypeptide is 4-hydroxy-tetrahydrodipicolinate reductase (Bacillus cytotoxicus (strain DSM 22905 / CIP 110041 / 391-98 / NVH 391-98)).